The following is a 429-amino-acid chain: Serine--tRNA ligase (429 aa).

Residue 235-237 coordinates L-serine; sequence TAE. 266 to 268 contributes to the ATP binding site; the sequence is RSE. An L-serine-binding site is contributed by glutamate 289. Position 353 to 356 (353 to 356) interacts with ATP; it reads EISS. Position 389 (serine 389) interacts with L-serine.

The protein belongs to the class-II aminoacyl-tRNA synthetase family. Type-1 seryl-tRNA synthetase subfamily. As to quaternary structure, homodimer. The tRNA molecule binds across the dimer.

It is found in the cytoplasm. It catalyses the reaction tRNA(Ser) + L-serine + ATP = L-seryl-tRNA(Ser) + AMP + diphosphate + H(+). The catalysed reaction is tRNA(Sec) + L-serine + ATP = L-seryl-tRNA(Sec) + AMP + diphosphate + H(+). It functions in the pathway aminoacyl-tRNA biosynthesis; selenocysteinyl-tRNA(Sec) biosynthesis; L-seryl-tRNA(Sec) from L-serine and tRNA(Sec): step 1/1. In terms of biological role, catalyzes the attachment of serine to tRNA(Ser). Is also able to aminoacylate tRNA(Sec) with serine, to form the misacylated tRNA L-seryl-tRNA(Sec), which will be further converted into selenocysteinyl-tRNA(Sec). This is Serine--tRNA ligase from Haemophilus influenzae (strain 86-028NP).